The following is a 251-amino-acid chain: MPDAVVFSPGGYRYIPAVFQYSAGIAAEPGFEIERVRFHRPVPLAEAFVAVESHLRAIGRPTTSFAQCELRSPDPFNDQGFIDFNTEYVKTLERWGIYKDRVNPVARTNVCPMYDKPTTPSMFAFSYTVPTTSAAKRPSFQLAGGGDARGGSAPYKDRIVAFGDTSPEGLREKVVFVIEEMESRLKTLGLGWADAVSTQLYTVQNIGHLVGPELARRGCGAGGLVWNYTRPPVIGLEYEMDVRGAVRETVL.

In terms of assembly, monomer.

It carries out the reaction (2Z,4E)-2-aminomuconate + H2O = (2Z,4E)-2-hydroxyhexa-2,4-dienedioate + NH4(+). It functions in the pathway xenobiotic degradation; 4-chloronitrobenzene degradation. The protein operates within xenobiotic degradation; nitrobenzene degradation. Its activity is regulated as follows. Cysteine residue modifying agents such as p-chloromercuribenzoate and the SH-binding metals Zn(2+), Ni(2+) and Cu(2+) completely inhibit deaminase activity, whereas Ca(2+), Mg(2+) and the histidine residue-modifying agent diethyl pyrocarbonate inhibit the activity by 23 to 50%. Its function is as follows. Involved in the biodegradation of xenobiotic compounds, such as nitrobenzene and 4-chloronitrobenzene (4-CNB). CnbZ preferentially catalyzes the deamination of 2-amino-5-chloromuconate (2A5CM) to yield 2-hydroxy-5-chloromuconate (2H5CM). Also able to catalyze the deamination of 2-aminomuconate to yield 2-hydroxymuconate, which spontaneously converts into its keto form, 2-oxalocrotonate. The protein is 2-amino-5-chloromuconate deaminase of Comamonas testosteroni (Pseudomonas testosteroni).